The following is a 254-amino-acid chain: MAIANKNIIFVAGLGGIGFDTSREIVKKGPKNLVILDRIENPAAIAELKALNPKVTVTFYLYDVTVSVAESTKLLQKIFDQLKTVDLLINGAGILDDHQIERTIAVNFTGTVNTITAIMSFWDKRKGGPGGVIANVCSVTGFNAIYQVPVYSASKAAALSFTNSLAKLAPITGVTAYSINPGITKTPLLHKFNSWLDVEPRVGELLLEHPTQTSLECAQNFVKAIEANQNGAIWKVDLGTLEAIEWTKHWDSHI.

10–33 (FVAGLGGIGFDTSREIVKKGPKNL) provides a ligand contact to NAD(+). Position 138 (Ser138) interacts with substrate. Tyr151 acts as the Proton acceptor in catalysis.

This sequence belongs to the short-chain dehydrogenases/reductases (SDR) family. Homodimer.

The catalysed reaction is a primary alcohol + NAD(+) = an aldehyde + NADH + H(+). It catalyses the reaction a secondary alcohol + NAD(+) = a ketone + NADH + H(+). In Drosophila mojavensis (Fruit fly), this protein is Alcohol dehydrogenase 1 (Adh1).